The chain runs to 353 residues: Galectin-9 (353 aa).

Residues 17-147 enclose the Galectin 1 domain; it reads FTGPIQGGLQ…CLKLSFITFQ (131 aa). A beta-D-galactoside is bound by residues N47, H60, R64, N74, and 81 to 87; that span reads WGPEERK. The segment at 167–186 is disordered; that stretch reads QFPRTPKGRKQKTQNFRPAH. The Galectin 2 domain maps to 225 to 353; sequence FYTPIPNGLY…GDIQLTHVQT (129 aa). Residues H265, R269, T279, and 285–291 each bind a beta-D-galactoside; that span reads WGQEERS.

Homodimer. Accentuated expression in liver and thymus of embryo, detected in embryonic heart, brain, lung, liver, and kidney. Highly expressed in adult thymus, small intestine, and liver, and to a lesser extent in lung, kidney, spleen, cardiac, and skeletal muscle. Barely detectable in brain and reticulocyte. Expressed in placenta, uterus and decidua during pregnancy. Expressed in CD4+ T-cells with higher levels in iTreg cells than other T-cell types and sustained high levels throughout iTreg cell differentiation (at protein level). Expressed in myeloid cells in lung. Constitutively expressed in microglia. Isoform 1 is expressed exclusively in the small intestine. Isoform 2 expression in decidua increases in pathological pregnancy from gestation day 7.5 to 13.5 and it is higher than in normal pregnancy. Isoform 3 expression in decidua is higher in normal pregnancy than in pathological pregnancy.

The protein resides in the cytoplasm. Its subcellular location is the nucleus. It is found in the secreted. Functionally, binds galactosides. Has high affinity for the Forssman pentasaccharide. Ligand for HAVCR2/TIM3. Binding to HAVCR2 induces T-helper type 1 lymphocyte (Th1) death. Also stimulates bactericidal activity in infected macrophages by causing macrophage activation and IL1B secretion which restricts intracellular bacterial growth. Ligand for P4HB; the interaction retains P4HB at the cell surface of Th2 T-helper cells, increasing disulfide reductase activity at the plasma membrane, altering the plasma membrane redox state and enhancing cell migration. Ligand for CD44; the interaction enhances binding of SMAD3 to the FOXP3 promoter, leading to up-regulation of FOXP3 expression and increased induced regulatory T (iTreg) cell stability and suppressive function. Promotes ability of mesenchymal stromal cells to suppress T-cell proliferation. Expands regulatory T-cells and induces cytotoxic T-cell apoptosis following virus infection. Activates ERK1/2 phosphorylation inducing cytokine (IL-6, IL-8, IL-12) and chemokine (CCL2) production in mast and dendritic cells. Inhibits degranulation and induces apoptosis of mast cells. Induces maturation and migration of dendritic cells. Inhibits natural killer (NK) cell function. Can transform NK cell phenotype from peripheral to decidual during pregnancy. Astrocyte derived galectin-9 enhances microglial TNF production. May play a role in thymocyte-epithelial interactions relevant to the biology of the thymus. May provide the molecular basis for urate flux across cell membranes, allowing urate that is formed during purine metabolism to efflux from cells and serving as an electrogenic transporter that plays an important role in renal and gastrointestinal urate excretion. Highly selective to the anion urate. Its function is as follows. Acts as an eosinophil chemoattractant. It also inhibits angiogenesis. Suppresses IFNG production by natural killer cells. This Mus musculus (Mouse) protein is Galectin-9 (Lgals9).